A 523-amino-acid chain; its full sequence is MKYLQTVASMKSKFDIVAIVEQYIKLVKSGSAYKGLCPFHAEKTPSFFVNPLQGYFYCFGCKKGGDVIGFLMDMEKINYNDALKILCEKSGIHYDDLKISRGSENKNENKDMVSKIYSLNSRLINTIKFFLSKNKKALDYVLKSRAISKEIVDLFELGYLPFNFKNGLELHDFLVSKGYSSEVLRKSGLFSKTNPKVSILFQRLIFPIKDFKGNVVGFGGRDLDGKGSKYINLGETEVFKKRELLYGFYEGFEEIKSTKSVILVEGYIDVLAFFTSGIKRAVSTLGTAFSKEHLALIQRYADEIIFSFDGDDAGLSATLKAYQICLPFNINVSVVRMDFGTDPADVLKSEGVDSLQKILNNRCDAFEYLLDVYSNKYNLNKTVDLNAMINLFLNLINLSKVDTQKKIFLDKLSNKLGIGVTTLLKDYYRIKERFVVDNNKRNLYAHNDDSYERYLIVALLKNFSYFSIVRRNIIDSDLINVDARKVFMCFENLFENNKDFSLMDLKKNLKDTYKVSEFFLKKF.

Residues Cys37–Cys61 form a CHC2-type zinc finger. The Toprim domain occupies Lys259–Gly340. Mg(2+)-binding residues include Glu265, Asp309, and Asp311.

This sequence belongs to the DnaG primase family. In terms of assembly, monomer. Interacts with DnaB. The cofactor is Zn(2+). It depends on Mg(2+) as a cofactor.

The enzyme catalyses ssDNA + n NTP = ssDNA/pppN(pN)n-1 hybrid + (n-1) diphosphate.. RNA polymerase that catalyzes the synthesis of short RNA molecules used as primers for DNA polymerase during DNA replication. In Borreliella burgdorferi (strain ATCC 35210 / DSM 4680 / CIP 102532 / B31) (Borrelia burgdorferi), this protein is DNA primase.